The sequence spans 101 residues: Small ribosomal subunit protein uS14 (101 aa).

This sequence belongs to the universal ribosomal protein uS14 family. Part of the 30S ribosomal subunit. Contacts proteins S3 and S10.

Binds 16S rRNA, required for the assembly of 30S particles and may also be responsible for determining the conformation of the 16S rRNA at the A site. The protein is Small ribosomal subunit protein uS14 of Phenylobacterium zucineum (strain HLK1).